The chain runs to 396 residues: Obg-like ATPase 1 (396 aa).

One can recognise an OBG-type G domain in the interval 23–283 (LKIGIVGLPN…LSAEERQKYL (261 aa)). 32–37 (NVGKST) contacts ATP. Residues Ser36 and Thr56 each coordinate Mg(2+). Leu231 is a binding site for ATP. A Nuclear export signal motif is present at residues 267 to 274 (LELKLQEL). At Lys294 the chain carries N6-acetyllysine. The 84-residue stretch at 304 to 387 (QLEYFFTAGP…EDGDIIFFKF (84 aa)) folds into the TGS domain.

The protein belongs to the TRAFAC class OBG-HflX-like GTPase superfamily. OBG GTPase family. YchF/OLA1 subfamily. In terms of assembly, monomer. Mg(2+) is required as a cofactor.

The protein resides in the cytoplasm. It is found in the nucleus. It localises to the nucleolus. In terms of biological role, hydrolyzes ATP, and can also hydrolyze GTP with lower efficiency. Has lower affinity for GTP. This Pongo abelii (Sumatran orangutan) protein is Obg-like ATPase 1.